The following is a 1427-amino-acid chain: Multidrug resistance-associated protein 5 (1427 aa).

At 1–147 (MPSDSEEVCL…IYRFISTRLW (147 aa)) the chain is on the cytoplasmic side. The helical transmembrane segment at 148 to 168 (FSCAVFFFCLIFGFIGPTCFI) threads the bilayer. The region spanning 151–432 (AVFFFCLIFG…IPYGSRYLAE (282 aa)) is the ABC transmembrane type-1 1 domain. Over 169 to 185 (RRLIAFAENPERDEQSR) the chain is Extracellular. A helical membrane pass occupies residues 186–206 (IVYSYGIALVAAISVVEFARV). Residues 207–268 (LSYGATWAVS…RLFDAVTFAP (62 aa)) lie on the Cytoplasmic side of the membrane. The helical transmembrane segment at 269 to 289 (LVLVGPLVLVGGIGYLLMVIG) threads the bilayer. R290 is a topological domain (extracellular). A helical transmembrane segment spans residues 291 to 311 (WSLLGILVFFVFDVIQFGLGK). At 312 to 375 (SMVACRNLAI…RKSGYAQSLA (64 aa)) the chain is on the cytoplasmic side. A helical membrane pass occupies residues 376 to 396 (IACGPVVPVVAAILTFVGVVL). Over 397–399 (AGN) the chain is Extracellular. The chain crosses the membrane as a helical span at residues 400-420 (DLLASDAFSAITVYFVMLFGI). Residues 421 to 770 (RMIPYGSRYL…TIAWRIYKQY (350 aa)) are Cytoplasmic-facing. Positions 486 to 707 (PTENEVIVVE…NDAYKTFVDA (222 aa)) constitute an ABC transporter 1 domain. 518 to 525 (GAVGCGKS) contacts ATP. A helical membrane pass occupies residues 771 to 791 (IHAAGGWPIWTCLVIGFIVNV). The 296-residue stretch at 783-1078 (LVIGFIVNVV…AVRTQTELEA (296 aa)) folds into the ABC transmembrane type-1 2 domain. The Extracellular segment spans residues 792-833 (VSNIFSTYWLSRWLKKGHDETTTITNGTEFLEMKTSLADSPV). N817 is a glycosylation site (N-linked (GlcNAc...) asparagine). The chain crosses the membrane as a helical span at residues 834–854 (TGFYAAVYLVALVVLTISGLF). Residues 855–909 (KACVFVKVSLTAATRLHDRMFQAVIHGATSFFDSTPTGRILNRFSKDMDEIDVKL) are Cytoplasmic-facing. Residues 910 to 930 (PFTAEVFLQNMITCLGFLVVI) traverse the membrane as a helical segment. Residue T931 is a topological domain, extracellular. The helical transmembrane segment at 932–952 (SVFPYFLLFAIPLFVVFVVFV) threads the bilayer. Over 953 to 1022 (SCFRAGIRNL…MFQSAMRWLA (70 aa)) the chain is Cytoplasmic. Residues 1023 to 1043 (VWLDLLVVVMTAIVALLTVML) form a helical membrane-spanning segment. Over 1044 to 1049 (TGTVSP) the chain is Extracellular. A helical membrane pass occupies residues 1050–1070 (ADAGMAIAFAVQMSGIFQFAV). Topologically, residues 1071-1427 (RTQTELEAKM…SSDTDIEVVQ (357 aa)) are cytoplasmic. The ABC transporter 2 domain occupies 1117-1351 (INFSEVNLRY…DWSVYKLEDK (235 aa)). Residue 1151 to 1158 (GRTGSGKS) participates in ATP binding. The tract at residues 1361–1427 (VGENSEHSME…SSDTDIEVVQ (67 aa)) is disordered. Basic and acidic residues predominate over residues 1382–1418 (DIVKVENEQKDSSDDVVHIESGDDDVKADSSEVKETS).

Belongs to the ABC transporter superfamily. ABCC family. Conjugate transporter (TC 3.A.1.208) subfamily. As to expression, highly expressed in the intestine and pharynx. Expressed at low levels in the hypodermis and in some neurons.

It localises to the basolateral cell membrane. Its function is as follows. Heme transporter required for the export of intestinal heme to different tissues and subcellular compartments. Also, required for the export of vitamin B12 from the intestine of the mother to the embryo to support embryonic development. The protein is Multidrug resistance-associated protein 5 of Caenorhabditis elegans.